The sequence spans 69 residues: ATP synthase F(0) complex subunit 8 (69 aa).

Residues 8 to 24 (TWLLTITLMILALFCIY) form a helical membrane-spanning segment. Lys-55 carries the post-translational modification N6-acetyllysine; alternate. At Lys-55 the chain carries N6-succinyllysine; alternate. Lys-58 carries the N6-acetyllysine modification.

The protein belongs to the ATPase protein 8 family. In terms of assembly, component of the ATP synthase complex composed at least of ATP5F1A/subunit alpha, ATP5F1B/subunit beta, ATP5MC1/subunit c (homooctomer), MT-ATP6/subunit a, MT-ATP8/subunit 8, ATP5ME/subunit e, ATP5MF/subunit f, ATP5MG/subunit g, ATP5MK/subunit k, ATP5MJ/subunit j, ATP5F1C/subunit gamma, ATP5F1D/subunit delta, ATP5F1E/subunit epsilon, ATP5PF/subunit F6, ATP5PB/subunit b, ATP5PD/subunit d, ATP5PO/subunit OSCP. ATP synthase complex consists of a soluble F(1) head domain (subunits alpha(3) and beta(3)) - the catalytic core - and a membrane F(0) domain - the membrane proton channel (subunits c, a, 8, e, f, g, k and j). These two domains are linked by a central stalk (subunits gamma, delta, and epsilon) rotating inside the F1 region and a stationary peripheral stalk (subunits F6, b, d, and OSCP). Interacts with PRICKLE3.

Its subcellular location is the mitochondrion membrane. Subunit 8, of the mitochondrial membrane ATP synthase complex (F(1)F(0) ATP synthase or Complex V) that produces ATP from ADP in the presence of a proton gradient across the membrane which is generated by electron transport complexes of the respiratory chain. ATP synthase complex consist of a soluble F(1) head domain - the catalytic core - and a membrane F(1) domain - the membrane proton channel. These two domains are linked by a central stalk rotating inside the F(1) region and a stationary peripheral stalk. During catalysis, ATP synthesis in the catalytic domain of F(1) is coupled via a rotary mechanism of the central stalk subunits to proton translocation. In vivo, can only synthesize ATP although its ATP hydrolase activity can be activated artificially in vitro. Part of the complex F(0) domain. The chain is ATP synthase F(0) complex subunit 8 from Osphranter robustus (Wallaroo).